We begin with the raw amino-acid sequence, 305 residues long: Ribonuclease BN (305 aa).

Zn(2+) is bound by residues His64, His66, Asp68, His69, His141, Asp212, and His270. Catalysis depends on Asp68, which acts as the Proton acceptor.

This sequence belongs to the RNase Z family. RNase BN subfamily. In terms of assembly, homodimer. Zn(2+) serves as cofactor.

Functionally, zinc phosphodiesterase, which has both exoribonuclease and endoribonuclease activities. In Salmonella paratyphi C (strain RKS4594), this protein is Ribonuclease BN.